The primary structure comprises 210 residues: 3-hexulose-6-phosphate synthase (210 aa).

Belongs to the HPS/KGPDC family. HPS subfamily.

It carries out the reaction D-ribulose 5-phosphate + formaldehyde = D-arabino-hex-3-ulose 6-phosphate. It functions in the pathway one-carbon metabolism; formaldehyde assimilation via RuMP pathway; D-fructose 6-phosphate from D-ribulose 5-phosphate and formaldehyde: step 1/2. Its function is as follows. Catalyzes the condensation of ribulose 5-phosphate with formaldehyde to form 3-hexulose 6-phosphate. The polypeptide is 3-hexulose-6-phosphate synthase (Staphylococcus epidermidis (strain ATCC 35984 / DSM 28319 / BCRC 17069 / CCUG 31568 / BM 3577 / RP62A)).